Reading from the N-terminus, the 704-residue chain is Polyribonucleotide nucleotidyltransferase (704 aa).

Residues D488 and D494 each contribute to the Mg(2+) site. A KH domain is found at 555 to 614 (PRITTIKINPEKIRDVIGKGGATIRALTEETGTTIELDDDGTVKIASSNGEATKEAIRRI). The S1 motif domain occupies 624–692 (GTVYNGKVVR…RQGRVRLSMK (69 aa)).

It belongs to the polyribonucleotide nucleotidyltransferase family. In terms of assembly, component of the RNA degradosome, which is a multiprotein complex involved in RNA processing and mRNA degradation. Requires Mg(2+) as cofactor.

The protein localises to the cytoplasm. The catalysed reaction is RNA(n+1) + phosphate = RNA(n) + a ribonucleoside 5'-diphosphate. Its function is as follows. Involved in mRNA degradation. Catalyzes the phosphorolysis of single-stranded polyribonucleotides processively in the 3'- to 5'-direction. In Shewanella pealeana (strain ATCC 700345 / ANG-SQ1), this protein is Polyribonucleotide nucleotidyltransferase.